The primary structure comprises 1061 residues: NACHT, LRR and PYD domains-containing protein 12 (1061 aa).

The region spanning 1–95 (MLRTAGRDGL…WERGQREDLV (95 aa)) is the Pyrin domain. Positions 129–201 (YRDYVRRKFR…SPIKIETLFE (73 aa)) constitute an FISNA domain. The 318-residue stretch at 211–528 (RTVVMQGAAG…EFFAAMYYIL (318 aa)) folds into the NACHT domain. Position 217 to 224 (217 to 224 (GAAGIGKS)) interacts with ATP. LRR repeat units lie at residues 828-848 (HLVE…RLLC), 857-878 (RLRT…ELAS), 885-906 (SLRE…LLCE), 914-935 (KLQT…GLSV), 942-962 (NLRE…WLLA), 971-992 (RLQK…NLYF), 999-1020 (TLTD…LLCK), and 1028-1049 (KLRV…RLAA).

This sequence belongs to the NLRP family. In terms of assembly, interacts (via pyrin domain) with ASC. Interacts (via pyrin domain) with FAF1 (via UBA domain). Interacts with MAP3K14; this interaction promotes proteasomal degradation of MAP3K14. Interacts with NOD2; this interaction promotes degradation of NOD2 through the ubiquitin-proteasome pathway. Interacts with HSPA1A and HSPA8. Interacts with HSP90AA1. Interacts with TRIM25; this interaction inhibits RIGI-mediated signaling pathway. As to expression, detected only in peripheral blood leukocytes, predominantly in eosinophils and granulocytes, and at lower levels in monocytes.

It is found in the cytoplasm. Its function is as follows. Plays an essential role as an potent mitigator of inflammation. Primarily expressed in dendritic cells and macrophages, inhibits both canonical and non-canonical NF-kappa-B and ERK activation pathways. Functions as a negative regulator of NOD2 by targeting it to degradation via the proteasome pathway. In turn, promotes bacterial tolerance. Also inhibits the RIGI-mediated immune signaling against RNA viruses by reducing the E3 ubiquitin ligase TRIM25-mediated 'Lys-63'-linked RIGI activation but enhancing the E3 ubiquitin ligase RNF125-mediated 'Lys-48'-linked RIGI degradation. Also acts as a negative regulator of inflammatory response to mitigate obesity and obesity-associated diseases in adipose tissue. The polypeptide is NACHT, LRR and PYD domains-containing protein 12 (NLRP12) (Homo sapiens (Human)).